A 271-amino-acid chain; its full sequence is Tryptophan synthase alpha chain (271 aa).

Residues Glu-49 and Asp-60 each act as proton acceptor in the active site.

This sequence belongs to the TrpA family. Tetramer of two alpha and two beta chains.

The catalysed reaction is (1S,2R)-1-C-(indol-3-yl)glycerol 3-phosphate + L-serine = D-glyceraldehyde 3-phosphate + L-tryptophan + H2O. It functions in the pathway amino-acid biosynthesis; L-tryptophan biosynthesis; L-tryptophan from chorismate: step 5/5. Its function is as follows. The alpha subunit is responsible for the aldol cleavage of indoleglycerol phosphate to indole and glyceraldehyde 3-phosphate. In Burkholderia multivorans (strain ATCC 17616 / 249), this protein is Tryptophan synthase alpha chain.